A 265-amino-acid chain; its full sequence is 3-methyl-2-oxobutanoate hydroxymethyltransferase (265 aa).

The Mg(2+) site is built by Asp-43 and Asp-82. Residues 43–44, Asp-82, and Lys-111 contribute to the 3-methyl-2-oxobutanoate site; that span reads DS. Glu-113 is a binding site for Mg(2+). Glu-180 (proton acceptor) is an active-site residue.

This sequence belongs to the PanB family. In terms of assembly, homodecamer; pentamer of dimers. It depends on Mg(2+) as a cofactor.

The protein localises to the cytoplasm. The catalysed reaction is 3-methyl-2-oxobutanoate + (6R)-5,10-methylene-5,6,7,8-tetrahydrofolate + H2O = 2-dehydropantoate + (6S)-5,6,7,8-tetrahydrofolate. Its pathway is cofactor biosynthesis; (R)-pantothenate biosynthesis; (R)-pantoate from 3-methyl-2-oxobutanoate: step 1/2. Catalyzes the reversible reaction in which hydroxymethyl group from 5,10-methylenetetrahydrofolate is transferred onto alpha-ketoisovalerate to form ketopantoate. This Francisella tularensis subsp. novicida (strain U112) protein is 3-methyl-2-oxobutanoate hydroxymethyltransferase.